We begin with the raw amino-acid sequence, 257 residues long: Snake venom serine proteinase 11 (257 aa).

The first 18 residues, methionine 1–alanine 18, serve as a signal peptide directing secretion. The propeptide occupies glutamine 19–leucine 24. The Peptidase S1 domain occupies valine 25–threonine 248. 6 disulfides stabilise this stretch: cysteine 31-cysteine 162, cysteine 49-cysteine 65, cysteine 97-cysteine 255, cysteine 141-cysteine 209, cysteine 173-cysteine 188, and cysteine 199-cysteine 224. Active-site charge relay system residues include histidine 64 and aspartate 109. A glycan (N-linked (GlcNAc...) asparagine) is linked at asparagine 120. Serine 203 serves as the catalytic Charge relay system.

The protein belongs to the peptidase S1 family. Snake venom subfamily. In terms of assembly, monomer. As to expression, expressed by the venom gland.

The protein localises to the secreted. In terms of biological role, snake venom serine protease that may act in the hemostasis system of the prey. In Crotalus adamanteus (Eastern diamondback rattlesnake), this protein is Snake venom serine proteinase 11.